Consider the following 266-residue polypeptide: NADP-dependent mannitol dehydrogenase (266 aa).

Residues Thr-31, Ile-33, Asn-107, and Arg-140 each coordinate NADP(+). Ser-159 (proton donor) is an active-site residue. The NADP(+) site is built by Tyr-174, Lys-178, Ile-206, and Thr-208. Residue Tyr-174 is the Proton acceptor of the active site. Lys-178 serves as the catalytic Lowers pKa of active site Tyr.

The protein belongs to the short-chain dehydrogenases/reductases (SDR) family. As to quaternary structure, homotetramer.

It is found in the vacuole. It catalyses the reaction D-mannitol + NADP(+) = D-fructose + NADPH + H(+). The chain is NADP-dependent mannitol dehydrogenase from Alternaria alternata (Alternaria rot fungus).